We begin with the raw amino-acid sequence, 638 residues long: Growth hormone receptor (638 aa).

A signal peptide spans 1 to 18; the sequence is MDLWRVFLTLALAVSSDM. Topologically, residues 19–265 are extracellular; it reads FPGSGATPAT…TLAACEEDFR (247 aa). 2 disulfides stabilise this stretch: C56–C66 and C101–C112. A glycan (N-linked (GlcNAc...) asparagine) is linked at N115. Residues C126 and C140 are joined by a disulfide bond. Positions 151 to 254 constitute a Fibronectin type-III domain; it reads PPIGLNWTLL…EVLRVTFPQM (104 aa). Residues N156, N161, and N200 are each glycosylated (N-linked (GlcNAc...) asparagine). Residues 240–244 carry the WSXWS motif motif; it reads YSEFS. The helical transmembrane segment at 266–289 threads the bilayer; sequence FPWFLIIIFGIFGVAVMLFVVIFS. Over 290-638 the chain is Cytoplasmic; that stretch reads KQQRIKMLIL…STDQLNKIMQ (349 aa). The tract at residues 295 to 380 is required for JAK2 binding; sequence KMLILPPVPV…QEKSAGILGA (86 aa). Positions 298–306 match the Box 1 motif motif; the sequence is ILPPVPVPK. The UbE motif signature appears at 341–350; that stretch reads DSWVEFIELD. S342 bears the Phosphoserine mark. The interval 357–389 is disordered; the sequence is KTEESDTDRLLSDDQEKSAGILGAKDDDSGRTS. Basic and acidic residues predominate over residues 363–373; it reads TDRLLSDDQEK. A phosphotyrosine mark is found at Y487 and Y594.

Belongs to the type I cytokine receptor family. Type 1 subfamily. In terms of assembly, on growth hormone (GH) binding, forms homodimers and binds JAK2 via a box 1-containing domain. Post-translationally, the soluble form (GHBP) is produced by phorbol ester-promoted proteolytic cleavage at the cell surface (shedding) by ADAM17/TACE. Shedding is inhibited by growth hormone (GH) binding to the receptor probably due to a conformational change in GHR rendering the receptor inaccessible to ADAM17. In terms of processing, on GH binding, phosphorylated on tyrosine residues in the cytoplasmic domain by JAK2. Phosphorylation on either (or all of) Tyr-534, Tyr-566 and/or Tyr-627 is required for STAT5 activation. Phosphorylation on Tyr-333 would seem necessary for JAK2 activation. Ubiquitinated by the ECS(SOCS2) complex following ligand-binding and phosphorylation by JAK2, leading to its degradation by the proteasome. Regulation by the ECS(SOCS2) complex acts as a negative feedback loop of growth hormone receptor signaling. Ubiquitination is not sufficient for GHR internalization. As to expression, highest expression in liver. Also expressed in heart, kidney and muscle.

The protein resides in the cell membrane. Its subcellular location is the secreted. In terms of biological role, receptor for pituitary gland growth hormone involved in regulating postnatal body growth. On ligand binding, couples to, and activates the JAK2/STAT5 pathway. Receptor for pituitary gland growth hormone (GH1) involved in regulating postnatal body growth. On ligand binding, couples to the JAK2/STAT5 pathway. Functionally, the soluble form (GHBP) acts as a reservoir of growth hormone in plasma and may be a modulator/inhibitor of GH signaling. This is Growth hormone receptor (Ghr) from Rattus norvegicus (Rat).